A 122-amino-acid polypeptide reads, in one-letter code: Large ribosomal subunit protein bL12 (122 aa).

It belongs to the bacterial ribosomal protein bL12 family. As to quaternary structure, homodimer. Part of the ribosomal stalk of the 50S ribosomal subunit. Forms a multimeric L10(L12)X complex, where L10 forms an elongated spine to which 2 to 4 L12 dimers bind in a sequential fashion. Binds GTP-bound translation factors.

Forms part of the ribosomal stalk which helps the ribosome interact with GTP-bound translation factors. Is thus essential for accurate translation. The sequence is that of Large ribosomal subunit protein bL12 from Streptococcus thermophilus (strain ATCC BAA-491 / LMD-9).